The sequence spans 900 residues: Peroxisomal hydratase-dehydrogenase-epimerase (900 aa).

Short-chain dehydrogenase like regions lie at residues 6 to 230 (SFKD…THES) and 319 to 535 (SLCN…ASEE). Ile14, Lys53, Asn100, Arg133, Tyr165, and Lys169 together coordinate NADP(+). Catalysis depends on Tyr165, which acts as the Proton donor. Lys169 acts as the Lowers pKa of active site Tyr in catalysis. (3R)-3-hydroxydecanoyl-CoA is bound by residues His689, Gly690, Lys719, Asp803, Asn805, Gly826, Phe851, and Thr852. Positions 775-887 (EVPHGKVPDF…DTTRNVIVLD (113 aa)) constitute a MaoC-like domain. A Microbody targeting signal motif is present at residues 898 to 900 (SKL).

The protein belongs to the short-chain dehydrogenases/reductases (SDR) family. In terms of assembly, monomer.

It is found in the peroxisome. The enzyme catalyses a (3R)-3-hydroxyacyl-CoA = a (2E)-enoyl-CoA + H2O. It catalyses the reaction a (3R)-3-hydroxyacyl-CoA + NAD(+) = a 3-oxoacyl-CoA + NADH + H(+). Its pathway is lipid metabolism; fatty acid beta-oxidation. In terms of biological role, second trifunctional enzyme acting on the beta-oxidation pathway for fatty acids, possessing hydratase-dehydrogenase-epimerase activities. Converts trans-2-enoyl-CoA via D-3-hydroxyacyl-CoA to 3-ketoacyl-CoA. This is Peroxisomal hydratase-dehydrogenase-epimerase (FOX2) from Saccharomyces cerevisiae (strain ATCC 204508 / S288c) (Baker's yeast).